A 364-amino-acid polypeptide reads, in one-letter code: D-alanine--D-alanine ligase (364 aa).

One can recognise an ATP-grasp domain in the interval 134 to 344 (KVLLKSFNIP…YESLVDKLIT (211 aa)). Residue 167–222 (NNKLNYPVIVKPSVLGSSIGINVAYNVSQIEKYIEEAFEYDLTVVVEKFIKAREIE) coordinates ATP. Mg(2+) contacts are provided by Asp-297, Glu-311, and Asn-313.

It belongs to the D-alanine--D-alanine ligase family. The cofactor is Mg(2+). It depends on Mn(2+) as a cofactor.

It is found in the cytoplasm. It carries out the reaction 2 D-alanine + ATP = D-alanyl-D-alanine + ADP + phosphate + H(+). The protein operates within cell wall biogenesis; peptidoglycan biosynthesis. Functionally, cell wall formation. This Borrelia duttonii (strain Ly) protein is D-alanine--D-alanine ligase.